The primary structure comprises 315 residues: Periplasmic [NiFeSe] hydrogenase small subunit (315 aa).

The segment at residues 1 to 32 (MSLSRREFVKLCSAGVAGLGISQIYHPGIVHA) is a signal peptide (tat-type signal). Cys50, Cys53, Cys158, Cys196, His240, Cys243, Cys263, Cys269, Cys278, Cys290, Cys296, and Cys299 together coordinate [4Fe-4S] cluster.

It belongs to the [NiFe]/[NiFeSe] hydrogenase small subunit family. In terms of assembly, heterodimer of a large and a small subunit. Requires [4Fe-4S] cluster as cofactor. Predicted to be exported by the Tat system. The position of the signal peptide cleavage has been experimentally proven.

The protein localises to the periplasm. It carries out the reaction H2 + A = AH2. This Desulfomicrobium baculatum (Desulfovibrio baculatus) protein is Periplasmic [NiFeSe] hydrogenase small subunit.